Reading from the N-terminus, the 157-residue chain is 6,7-dimethyl-8-ribityllumazine synthase (157 aa).

5-amino-6-(D-ribitylamino)uracil contacts are provided by residues tryptophan 27, 59-61 (AIE), and 81-83 (VVI). A (2S)-2-hydroxy-3-oxobutyl phosphate-binding site is contributed by 86–87 (ET). The active-site Proton donor is histidine 89. Asparagine 114 lines the 5-amino-6-(D-ribitylamino)uracil pocket. A (2S)-2-hydroxy-3-oxobutyl phosphate-binding site is contributed by arginine 128.

The protein belongs to the DMRL synthase family. Homopentamer.

The enzyme catalyses (2S)-2-hydroxy-3-oxobutyl phosphate + 5-amino-6-(D-ribitylamino)uracil = 6,7-dimethyl-8-(1-D-ribityl)lumazine + phosphate + 2 H2O + H(+). It participates in cofactor biosynthesis; riboflavin biosynthesis; riboflavin from 2-hydroxy-3-oxobutyl phosphate and 5-amino-6-(D-ribitylamino)uracil: step 1/2. Functionally, catalyzes the formation of 6,7-dimethyl-8-ribityllumazine by condensation of 5-amino-6-(D-ribitylamino)uracil with 3,4-dihydroxy-2-butanone 4-phosphate. This is the penultimate step in the biosynthesis of riboflavin. The chain is 6,7-dimethyl-8-ribityllumazine synthase from Mycolicibacterium vanbaalenii (strain DSM 7251 / JCM 13017 / BCRC 16820 / KCTC 9966 / NRRL B-24157 / PYR-1) (Mycobacterium vanbaalenii).